A 441-amino-acid polypeptide reads, in one-letter code: GTPase Der (441 aa).

2 EngA-type G domains span residues 4–169 and 178–353; these read PVVA…PEDI and IKVA…DQAA. GTP-binding positions include 10-17, 57-61, 120-123, 184-191, 231-235, and 296-299; these read GRPNVGKS, DTGGI, NKVD, GKPNAGKS, DTAGI, and NKWD. The KH-like domain maps to 354-438; sequence FRISTGMLND…PIRFIHRQRE (85 aa).

This sequence belongs to the TRAFAC class TrmE-Era-EngA-EngB-Septin-like GTPase superfamily. EngA (Der) GTPase family. As to quaternary structure, associates with the 50S ribosomal subunit.

In terms of biological role, GTPase that plays an essential role in the late steps of ribosome biogenesis. This is GTPase Der from Ruminiclostridium cellulolyticum (strain ATCC 35319 / DSM 5812 / JCM 6584 / H10) (Clostridium cellulolyticum).